Here is a 669-residue protein sequence, read N- to C-terminus: uncharacterized protein (669 aa).

Transmembrane regions (helical) follow at residues 39–61 (LCPL…GTSW), 124–146 (ISLW…LISI), 153–175 (GIIY…YALG), 190–212 (GLAF…FFGV), 221–243 (FAPG…QTAL), and 263–285 (IAAG…IRYL). RCK C-terminal domains lie at 316 to 397 (AGSL…KLIG) and 398 to 483 (KESD…LGGR). Helical transmembrane passes span 484 to 506 (PILN…GYIF), 516 to 538 (IPFA…YWRS), 558 to 580 (IGLN…ESFH), 585 to 607 (IWVA…VVGI), and 645 to 667 (VPYP…FAML).

The protein belongs to the AAE transporter (TC 2.A.81) family.

It is found in the cell membrane. This is an uncharacterized protein from Desulfotalea psychrophila (strain LSv54 / DSM 12343).